The chain runs to 550 residues: PAB1-binding protein 1 (550 aa).

Residues 11–95 enclose the Sm domain; it reads RLEYLYLNLV…IVMIEVQNAK (85 aa). 2 disordered regions span residues 201–296 and 441–550; these read HDDE…HKRM and GMGN…RVGK. The span at 214 to 223 shows a compositional bias: basic and acidic residues; the sequence is DVHRPQEKKP. A compositionally biased stretch (low complexity) spans 244–262; the sequence is AAAAPATAPTTAPAAAPAP. Over residues 263-281 the composition is skewed to pro residues; the sequence is AAAPPAAAPAAAAPPPPPA.

This sequence belongs to the ataxin-2 family. Forms a complex composed of at least MKT1, PBP1, XAC1 and LSM12. Forms a complex composed of at least MKT1L, PBP1, XAC1 and LSM12. Within the complex, interacts with MKT1 (via C-terminus); the interaction is direct. Interacts (via C-terminus) with ZC3H11; the interaction is direct.

The protein resides in the cytoplasm. It is found in the cytosol. Its subcellular location is the stress granule. Its function is as follows. Involved in post-transcriptional regulation of gene expression. Promotes mRNA stabilization by bridging poly(A)-binding protein to mRNAs. The sequence is that of PAB1-binding protein 1 from Trypanosoma brucei brucei (strain 927/4 GUTat10.1).